The primary structure comprises 823 residues: Zygotic DNA replication licensing factor mcm6 (823 aa).

The segment at 159–186 (CLDCQTLVRDVEQQFKYTQPSICRNPVC) adopts a C4-type zinc-finger fold. The MCM domain maps to 347–554 (LYHNLCTSLF…TDYAIARRIV (208 aa)). 397–404 (GDPSTAKS) contacts ATP. An Arginine finger motif is present at residues 529–532 (SRFD). The interval 666 to 713 (NLDQEDEHEAEEEPQEVINGDASVPSGVNGHVNGMNGHAEEPNAATPK) is disordered. Over residues 667–680 (LDQEDEHEAEEEPQ) the composition is skewed to acidic residues. The segment covering 692-702 (GVNGHVNGMNG) has biased composition (low complexity).

Belongs to the MCM family. As to quaternary structure, component of the mcm2-7 complex (RLF-M). The complex forms a toroidal hexameric ring with the proposed subunit order mcm2-mcm6-mcm4-mcm7-mcm3-mcm5. Begins to associate with zmcm3, mcm4 and mcm7 into mcm complexes at the neurula stage.

The protein resides in the nucleus. It catalyses the reaction ATP + H2O = ADP + phosphate + H(+). In terms of biological role, acts as a component of the mcm2-7 complex (mcm complex) which is the putative replicative helicase essential for 'once per cell cycle' DNA replication initiation and elongation in eukaryotic cells. The active ATPase sites in the mcm2-7 ring are formed through the interaction surfaces of two neighboring subunits such that a critical structure of a conserved arginine finger motif is provided in trans relative to the ATP-binding site of the Walker A box of the adjacent subunit. The six ATPase active sites, however, are likely to contribute differentially to the complex helicase activity. The existence of maternal and zygotic forms of mcm3 and mcm6 suggests that specific forms of mcm2-7 complexes may be used during different stages of development. May replace mmcm6 in the mcm2-7 complex. In Xenopus tropicalis (Western clawed frog), this protein is Zygotic DNA replication licensing factor mcm6.